We begin with the raw amino-acid sequence, 501 residues long: Zinc finger protein PLAG1 (501 aa).

The segment at 1 to 30 is disordered; the sequence is MATVIPGDLSEVRDTQKVPSGKRKRGETKP. Positions 22–25 match the Nuclear localization signal motif; it reads KRKR. 7 C2H2-type zinc fingers span residues 34 to 56, 62 to 86, 92 to 114, 121 to 143, 150 to 172, 185 to 207, and 213 to 236; these read FPCQ…SYSH, YKCT…MATH, HKCN…LHTH, FKCE…LALH, LTCK…LKTH, HQCE…MVVH, and FLCQ…KKSH. Composition is skewed to low complexity over residues 366–380 and 455–467; these read SGMP…ASSS and TQLP…PQDP. 2 disordered regions span residues 366-406 and 447-474; these read SGMP…GSVP and QEEA…IGLG.

This sequence belongs to the krueppel C2H2-type zinc-finger protein family. Expressed in nephroblastoma.

It localises to the nucleus. Its function is as follows. Transcription factor and proto-oncogene whose activation results in up-regulation of target genes, such as IGFII, leading to uncontrolled cell proliferation. The chain is Zinc finger protein PLAG1 (PLAG1) from Gallus gallus (Chicken).